The following is a 520-amino-acid chain: Keratin, type II cytoskeletal 72 (520 aa).

The head stretch occupies residues 1-133 (MSRQLTLYPG…DPEIQKVRAQ (133 aa)). Residues 134–169 (EREQIKALNNKFASFIDKVRFLEQQNQVLETKWELL) are coil 1A. Positions 134 to 447 (EREQIKALNN…KLLESEESRM (314 aa)) constitute an IF rod domain. A linker 1 region spans residues 170–188 (QQLDLNNSKRSLEPVHESY). The segment at 189–280 (ISNLQKQLEI…VLFEGEIAQM (92 aa)) is coil 1B. Residues 281 to 304 (QSHISDTSVILSMDNNRQLDLDSI) are linker 12. Residues 305 to 443 (LAEVRAQYEE…ATYRKLLESE (139 aa)) form a coil 2 region. The interval 444–520 (ESRMAGEYPN…SSGTTKKTSR (77 aa)) is tail. Positions 494 to 520 (KGSCGSELKDPPAKTSGSSGTTKKTSR) are disordered. A compositionally biased stretch (low complexity) spans 507–520 (KTSGSSGTTKKTSR).

It belongs to the intermediate filament family. Heterotetramer of two type I and two type II keratins.

In terms of biological role, has a role in hair formation. Specific component of keratin intermediate filaments in the inner root sheath (IRS) of the hair follicle. This chain is Keratin, type II cytoskeletal 72 (Krt72), found in Mus musculus (Mouse).